Reading from the N-terminus, the 513-residue chain is MQLNSTEISDLIKQRIEQFEVVSEARNEGTIVAVSDGIIRVHGLADVMQGEMIELPGNRYAIALNLERDSVGAVVMGPYADLAEGQKVKTTGRILEVPVGRGLLGRVVNTLGQPIDGKGPIDNDGFSPVEVIAPGVIERKSVDQPVQTGYKAVDSMIPIGRGQRELVIGDRQTGKTALAIDAIINQKDSGIKCVYVAVGQKASTIANVVRKLEEHGALANTVVVVATASEAAALQYLAPYSGCSMGEYFRDRGEDALIVYDDLSKQAVAYRQISLLLKRPPGREAYPGDVFYLHSRLLERASRVNAEYVEKFTNGEVKGQTGSLTALPIIETQAGDVSAFVPTNVISITDGQIFLETDLFNSGLRPAVNPGISVSRVGGAAQTKIIKKLSGGIRTALAQYRELAAFSQFASDLDDATRAQLEHGERVTELMKQKQYAPMSVADQSVSIFAAEKGYLKGVELNKIGDFEASLLSYMNSEHADLMKTINETGDYNADIEGGLKAGLDKFVETQTW.

169–176 is a binding site for ATP; it reads GDRQTGKT.

It belongs to the ATPase alpha/beta chains family. F-type ATPases have 2 components, CF(1) - the catalytic core - and CF(0) - the membrane proton channel. CF(1) has five subunits: alpha(3), beta(3), gamma(1), delta(1), epsilon(1). CF(0) has three main subunits: a(1), b(2) and c(9-12). The alpha and beta chains form an alternating ring which encloses part of the gamma chain. CF(1) is attached to CF(0) by a central stalk formed by the gamma and epsilon chains, while a peripheral stalk is formed by the delta and b chains.

The protein localises to the cell inner membrane. It catalyses the reaction ATP + H2O + 4 H(+)(in) = ADP + phosphate + 5 H(+)(out). Produces ATP from ADP in the presence of a proton gradient across the membrane. The alpha chain is a regulatory subunit. In Shewanella loihica (strain ATCC BAA-1088 / PV-4), this protein is ATP synthase subunit alpha.